Consider the following 488-residue polypeptide: Zinc metalloproteinase-disintegrin agkistin (488 aa).

Residues 1 to 20 (MIQVLLVTICLAVFPYQGSS) form the signal peptide. Residues 21 to 195 (IILESGNVND…NFPPDGRIEF (175 aa)) constitute a propeptide that is removed on maturation. One can recognise a Peptidase M12B domain in the interval 198–394 (RYIELVIVAD…NPLASYCLYN (197 aa)). Glu-201 lines the Ca(2+) pocket. N-linked (GlcNAc...) asparagine glycosylation occurs at Asn-258. Asp-285 contacts Ca(2+). 3 disulfide bridges follow: Cys-309/Cys-391, Cys-349/Cys-373, and Cys-351/Cys-356. A Zn(2+)-binding site is contributed by His-334. The active site involves Glu-335. Residues His-338 and His-344 each contribute to the Zn(2+) site. Ca(2+)-binding residues include Cys-391, Asn-394, Val-406, Asn-409, Glu-413, Glu-416, and Asp-419. Residues 404-488 (PPVCGNYYLE…AGCPRNPSHA (85 aa)) enclose the Disintegrin domain. 7 disulfides stabilise this stretch: Cys-407–Cys-426, Cys-418–Cys-436, Cys-420–Cys-431, Cys-430–Cys-453, Cys-444–Cys-450, Cys-449–Cys-474, and Cys-462–Cys-481. The short motif at 466 to 468 (RGD) is the Cell attachment site element.

It belongs to the venom metalloproteinase (M12B) family. P-II subfamily. P-IIb sub-subfamily. In terms of assembly, monomer. Requires Zn(2+) as cofactor. In terms of tissue distribution, expressed by the venom gland.

Its subcellular location is the secreted. Its function is as follows. Inhibits ADP-induced human platelet aggregation, inhibits bovine aortic endothelial cells (BAEC) migration, has anti-angiogenic activity and induces BAEC and human micro-vascular endothelial cell (HMEC) apoptosis. The metalloproteinase domain may act in hemorrhage. In Gloydius halys (Chinese water mocassin), this protein is Zinc metalloproteinase-disintegrin agkistin.